A 247-amino-acid polypeptide reads, in one-letter code: Epidermal cell differentiation inhibitor (247 aa).

The first 35 residues, 1–35 (MKNKLLFKIFLSLSLALSVYSINDKIIEVSNTSLA), serve as a signal peptide directing secretion. In terms of domain architecture, TR mART core spans 39–247 (KNFTDLDEAT…IIITAIVFKK (209 aa)). Catalysis depends on residues arginine 120, serine 173, and glutamate 215.

It to ADP-ribosyltransferase C3 of Clostridium.

Inhibits terminal differentiation of cultured mouse keratinocytes. In culture, also inhibits the differentiation of human keratinocytes. Probable ADP-ribosyltransferase. This is Epidermal cell differentiation inhibitor from Staphylococcus aureus.